A 187-amino-acid polypeptide reads, in one-letter code: Putative lipoprotein LppJ (187 aa).

The first 28 residues, 1 to 28 (MPHSTADRRLRLTRQALLAAAVVPLLAG), serve as a signal peptide directing secretion. Cys29 carries the N-palmitoyl cysteine lipid modification. Cys29 carries S-diacylglycerol cysteine lipidation.

It is found in the cell membrane. This is Putative lipoprotein LppJ (lppJ) from Mycobacterium tuberculosis (strain CDC 1551 / Oshkosh).